A 95-amino-acid chain; its full sequence is Aspartyl/glutamyl-tRNA(Asn/Gln) amidotransferase subunit C (95 aa).

Belongs to the GatC family. Heterotrimer of A, B and C subunits.

The enzyme catalyses L-glutamyl-tRNA(Gln) + L-glutamine + ATP + H2O = L-glutaminyl-tRNA(Gln) + L-glutamate + ADP + phosphate + H(+). It catalyses the reaction L-aspartyl-tRNA(Asn) + L-glutamine + ATP + H2O = L-asparaginyl-tRNA(Asn) + L-glutamate + ADP + phosphate + 2 H(+). Functionally, allows the formation of correctly charged Asn-tRNA(Asn) or Gln-tRNA(Gln) through the transamidation of misacylated Asp-tRNA(Asn) or Glu-tRNA(Gln) in organisms which lack either or both of asparaginyl-tRNA or glutaminyl-tRNA synthetases. The reaction takes place in the presence of glutamine and ATP through an activated phospho-Asp-tRNA(Asn) or phospho-Glu-tRNA(Gln). The sequence is that of Aspartyl/glutamyl-tRNA(Asn/Gln) amidotransferase subunit C from Chromohalobacter salexigens (strain ATCC BAA-138 / DSM 3043 / CIP 106854 / NCIMB 13768 / 1H11).